The following is a 505-amino-acid chain: Flagellin (505 aa).

Belongs to the bacterial flagellin family.

The protein resides in the secreted. It is found in the bacterial flagellum. In terms of biological role, flagellin is the subunit protein which polymerizes to form the filaments of bacterial flagella. The sequence is that of Flagellin (fliC) from Salmonella muenchen.